We begin with the raw amino-acid sequence, 89 residues long: Small ribosomal subunit protein uS15 (89 aa).

It belongs to the universal ribosomal protein uS15 family. Part of the 30S ribosomal subunit. Forms a bridge to the 50S subunit in the 70S ribosome, contacting the 23S rRNA.

Its function is as follows. One of the primary rRNA binding proteins, it binds directly to 16S rRNA where it helps nucleate assembly of the platform of the 30S subunit by binding and bridging several RNA helices of the 16S rRNA. Forms an intersubunit bridge (bridge B4) with the 23S rRNA of the 50S subunit in the ribosome. This chain is Small ribosomal subunit protein uS15, found in Prochlorococcus marinus (strain MIT 9312).